The following is a 221-amino-acid chain: Urease accessory protein UreF (221 aa).

This sequence belongs to the UreF family. UreD, UreF and UreG form a complex that acts as a GTP-hydrolysis-dependent molecular chaperone, activating the urease apoprotein by helping to assemble the nickel containing metallocenter of UreC. The UreE protein probably delivers the nickel.

The protein resides in the cytoplasm. Its function is as follows. Required for maturation of urease via the functional incorporation of the urease nickel metallocenter. The chain is Urease accessory protein UreF from Vibrio parahaemolyticus.